Reading from the N-terminus, the 253-residue chain is tRNA-cytidine(32) 2-sulfurtransferase 2 (253 aa).

The short motif at 33–38 (SGGKDS) is the PP-loop motif element. Residues Cys-108, Cys-111, and Cys-199 each contribute to the [4Fe-4S] cluster site.

It belongs to the TtcA family. Homodimer. Mg(2+) is required as a cofactor. [4Fe-4S] cluster serves as cofactor.

The protein localises to the cytoplasm. The catalysed reaction is cytidine(32) in tRNA + S-sulfanyl-L-cysteinyl-[cysteine desulfurase] + AH2 + ATP = 2-thiocytidine(32) in tRNA + L-cysteinyl-[cysteine desulfurase] + A + AMP + diphosphate + H(+). It functions in the pathway tRNA modification. Functionally, catalyzes the ATP-dependent 2-thiolation of cytidine in position 32 of tRNA, to form 2-thiocytidine (s(2)C32). The sulfur atoms are provided by the cysteine/cysteine desulfurase (IscS) system. In Francisella tularensis subsp. novicida (strain U112), this protein is tRNA-cytidine(32) 2-sulfurtransferase 2.